We begin with the raw amino-acid sequence, 235 residues long: MINPVYVAIDTTEAARAIALAERLKGQVGGFKLGLEYFTANGPAGMEAVSGLGMPLFVDLKLHDIPNTVAAAMKGVVRLGAAITTIHASGGAAMIRAAVDAANDEAAKLGIAPPAVVAVTVLTSLDQAGAEQVGFERPVLDQVKRLATLAQDSGAAGIVCSPLEVEAVRALCGPDFKLVIPGIRPAWSEAGDQKRFLTPAEARAKGADVLVIGRPITAAADPAEAAGRIKAELGL.

Residues D10, K32, 59–68, T123, R184, Q193, G213, and R214 contribute to the substrate site; that span reads DLKLHDIPNT. K61 acts as the Proton donor in catalysis.

The protein belongs to the OMP decarboxylase family. Type 1 subfamily. Homodimer.

It carries out the reaction orotidine 5'-phosphate + H(+) = UMP + CO2. It functions in the pathway pyrimidine metabolism; UMP biosynthesis via de novo pathway; UMP from orotate: step 2/2. Catalyzes the decarboxylation of orotidine 5'-monophosphate (OMP) to uridine 5'-monophosphate (UMP). The chain is Orotidine 5'-phosphate decarboxylase from Paramagnetospirillum magneticum (strain ATCC 700264 / AMB-1) (Magnetospirillum magneticum).